A 683-amino-acid chain; its full sequence is DNA-directed RNA polymerase subunit beta' (683 aa).

Positions 69, 71, 87, and 90 each coordinate Zn(2+). The Mg(2+) site is built by Asp489, Asp491, and Asp493.

Belongs to the RNA polymerase beta' chain family. RpoC1 subfamily. In terms of assembly, in plastids the minimal PEP RNA polymerase catalytic core is composed of four subunits: alpha, beta, beta', and beta''. When a (nuclear-encoded) sigma factor is associated with the core the holoenzyme is formed, which can initiate transcription. Requires Mg(2+) as cofactor. It depends on Zn(2+) as a cofactor.

The protein localises to the plastid. It localises to the chloroplast. The catalysed reaction is RNA(n) + a ribonucleoside 5'-triphosphate = RNA(n+1) + diphosphate. Its function is as follows. DNA-dependent RNA polymerase catalyzes the transcription of DNA into RNA using the four ribonucleoside triphosphates as substrates. The protein is DNA-directed RNA polymerase subunit beta' of Saccharum hybrid (Sugarcane).